The primary structure comprises 357 residues: G-protein coupled receptor 183 (357 aa).

Residues 1–32 (MANNFTTPLAASHGNNCDLYAHHSTARILMPL) lie on the Extracellular side of the membrane. An N-linked (GlcNAc...) asparagine glycan is attached at Asn4. The helical transmembrane segment at 33-53 (HYSLVFIIGLVGNLLALVVIV) threads the bilayer. Topologically, residues 54-68 (QNRKKINSTTLYSMN) are cytoplasmic. The helical transmembrane segment at 69-89 (LVISDILFTTALPTRIVYYAL) threads the bilayer. Arg83 contributes to the 7alpha,25-dihydroxycholesterol binding site. Over 90–101 (GFDWRIGDALCR) the chain is Extracellular. Cys100 and Cys177 are oxidised to a cystine. Residues 102–122 (ITALLFYINTYAGVNFMTCLS) traverse the membrane as a helical segment. 2 residues coordinate 7alpha,25-dihydroxycholesterol: Tyr108 and Tyr112. The segment at 122 to 130 (SIDRFFAVV) is interaction with G proteins. Topologically, residues 123-143 (IDRFFAVVHPLRYNKIKRIEY) are cytoplasmic. A helical membrane pass occupies residues 144-164 (AKGICVFVWILVFAQTLPLLL). The Extracellular portion of the chain corresponds to 165–190 (KPMSKQEADKTTCMEYPNFEGTASLP). A helical membrane pass occupies residues 191-211 (WILLGACLLGYVLPLAIILLC). At 212–240 (YSQICCKLFRTAKQNPLTEKSGVNKKALN) the chain is on the cytoplasmic side. A helical transmembrane segment spans residues 241-261 (TIILIIGVFVLCFTPYHVAIM). Tyr256 provides a ligand contact to 7alpha,25-dihydroxycholesterol. Residues 262–287 (QHMVKTLYAPGALGCGVRHSFQISLH) are Extracellular-facing. A helical membrane pass occupies residues 288 to 308 (FTVCLMNFNCCMDPFIYFFAC). At 309–357 (KGYKRKVMKMLKRQVSVSISSAVRSAPEENSREMTESQMMIHSKASNGR) the chain is on the cytoplasmic side. 2 positions are modified to phosphoserine: Ser324 and Ser345. Positions 336 to 357 (EENSREMTESQMMIHSKASNGR) are disordered. Positions 344–357 (ESQMMIHSKASNGR) are enriched in polar residues.

This sequence belongs to the G-protein coupled receptor 1 family. As to quaternary structure, homodimer and heterodimer. Heterodimerizes with CXCR5; leading to modulate the interaction between of CXCL13 and CXCR5.

It is found in the cell membrane. G-protein coupled receptor expressed in lymphocytes that acts as a chemotactic receptor for B-cells, T-cells, splenic dendritic cells, monocytes/macrophages and astrocytes. Receptor for oxysterol 7-alpha,25-dihydroxycholesterol (7-alpha,25-OHC) and other related oxysterols. Mediates cell positioning and movement of a number of cells by binding the 7-alpha,25-OHC ligand that forms a chemotactic gradient. Binding of 7-alpha,25-OHC mediates the correct localization of B-cells during humoral immune responses. Guides B-cell movement along the B-cell zone-T-cell zone boundary and later to interfollicular and outer follicular regions. Its specific expression during B-cell maturation helps position B-cells appropriately for mounting T-dependent antibody responses. Collaborates with CXCR5 to mediate B-cell migration; probably by forming a heterodimer with CXCR5 that affects the interaction between of CXCL13 and CXCR5. Also acts as a chemotactic receptor for some T-cells upon binding to 7-alpha,25-OHC ligand. Promotes follicular helper T (Tfh) cells differentiation by positioning activated T-cells at the follicle-T-zone interface, promoting contact of newly activated CD4 T-cells with activated dendritic cells and exposing them to Tfh-cell-promoting inducible costimulator (ICOS) ligand. Expression in splenic dendritic cells is required for their homeostasis, localization and ability to induce B- and T-cell responses: GPR183 acts as a chemotactic receptor in dendritic cells that mediates the accumulation of CD4(+) dendritic cells in bridging channels. Regulates migration of astrocytes and is involved in communication between astrocytes and macrophages. Promotes osteoclast precursor migration to bone surfaces. Signals constitutively through G(i)-alpha, but not G(s)-alpha or G(q)-alpha. Signals constitutively also via MAPK1/3 (ERK1/2). The polypeptide is G-protein coupled receptor 183 (Gpr183) (Rattus norvegicus (Rat)).